The primary structure comprises 322 residues: NADH-quinone oxidoreductase subunit H (322 aa).

8 helical membrane-spanning segments follow: residues 15 to 35, 81 to 101, 114 to 134, 149 to 169, 184 to 204, 237 to 257, 265 to 285, and 299 to 319; these read IFQS…MSVV, ITFL…ITII, IGVL…LLAG, ATAQ…GVVA, IGLW…IAGL, FFIG…TMFF, FPSY…FILI, and LFGW…TALI.

Belongs to the complex I subunit 1 family. As to quaternary structure, NDH-1 is composed of 13 different subunits. Subunits NuoA, H, J, K, L, M, N constitute the membrane sector of the complex.

The protein resides in the cell membrane. It catalyses the reaction a quinone + NADH + 5 H(+)(in) = a quinol + NAD(+) + 4 H(+)(out). In terms of biological role, NDH-1 shuttles electrons from NADH, via FMN and iron-sulfur (Fe-S) centers, to quinones in the respiratory chain. The immediate electron acceptor for the enzyme in this species is believed to be ubiquinone. Couples the redox reaction to proton translocation (for every two electrons transferred, four hydrogen ions are translocated across the cytoplasmic membrane), and thus conserves the redox energy in a proton gradient. This subunit may bind ubiquinone. The polypeptide is NADH-quinone oxidoreductase subunit H (Buchnera aphidicola subsp. Baizongia pistaciae (strain Bp)).